The following is a 170-amino-acid chain: Small ribosomal subunit protein mS41 (170 aa).

Residues 1-20 (MFRTLLSSTVRSIQLKPVTS) constitute a mitochondrion transit peptide.

It belongs to the mitochondrion-specific ribosomal protein mS41 family. In terms of assembly, component of the mitochondrial small ribosomal subunit (mt-SSU).

It localises to the mitochondrion. Functionally, component of the mitochondrial ribosome (mitoribosome), a dedicated translation machinery responsible for the synthesis of mitochondrial genome-encoded proteins, including at least some of the essential transmembrane subunits of the mitochondrial respiratory chain. The mitoribosomes are attached to the mitochondrial inner membrane and translation products are cotranslationally integrated into the membrane. mS41 is involved in telomere length regulation. In Candida albicans (strain SC5314 / ATCC MYA-2876) (Yeast), this protein is Small ribosomal subunit protein mS41 (FYV4).